We begin with the raw amino-acid sequence, 467 residues long: Solute carrier family 52, riboflavin transporter, member 3 (467 aa).

The Cytoplasmic portion of the chain corresponds to 1–2; sequence MA. Residues 3-23 form a helical membrane-spanning segment; it reads FLIHLLVCTFGMGSWVAINGL. The Extracellular portion of the chain corresponds to 24 to 43; the sequence is WVELPLLVTELPEGWYLPSY. The chain crosses the membrane as a helical span at residues 44 to 64; that stretch reads LTVIIQLANVGPLLVTLLHHF. Over 65–71 the chain is Cytoplasmic; sequence RPGCLSE. A helical membrane pass occupies residues 72–92; that stretch reads VAVVFTVLGVGTIACTLFAFL. Residues 93–105 lie on the Extracellular side of the membrane; the sequence is WNVTSWVLGSRHS. N-linked (GlcNAc...) asparagine glycosylation occurs at Asn94. The helical transmembrane segment at 106–126 threads the bilayer; the sequence is IAFLVLTFFLALVDCTSSVTF. The Cytoplasmic segment spans residues 127-137; that stretch reads LPFMSRLPTYY. The chain crosses the membrane as a helical span at residues 138-158; it reads LTTFFVGEGLSGLLPALVALA. Residues 159 to 220 lie on the Extracellular side of the membrane; sequence QGSGLTTCVN…SRYLPANFSP (62 aa). Residue Asn168 is glycosylated (N-linked (GlcNAc...) asparagine). Residues 221-241 traverse the membrane as a helical segment; sequence LVFFLLLSFMMACCFISFFFL. The Cytoplasmic portion of the chain corresponds to 242–294; the sequence is QRQPKRWEASIEDLLTSQVTLNSIRPQEGKDLGPPEESGKAQDPPEEKTAPQH. Phosphoserine is present on Ser251. A disordered region spans residues 266–288; the sequence is RPQEGKDLGPPEESGKAQDPPEE. Over residues 268 to 288 the composition is skewed to basic and acidic residues; sequence QEGKDLGPPEESGKAQDPPEE. A helical transmembrane segment spans residues 295–315; it reads LAHLTFIYVLVAFVNALTNGV. Topologically, residues 316–333 are extracellular; that stretch reads LPSVQTYSCLSYGPVAYH. The chain crosses the membrane as a helical span at residues 334–354; sequence LSATLSSMASPLTCFLSIFLP. The Cytoplasmic segment spans residues 355 to 359; the sequence is NRSLP. The chain crosses the membrane as a helical span at residues 360–380; that stretch reads FLGVLAVLGTSFGAYNMAMAV. The Extracellular segment spans residues 381 to 394; that stretch reads MSPCPFMQGHWGGE. A helical transmembrane segment spans residues 395-415; the sequence is VLIVVSWVLFTGCLSYVKVML. The Cytoplasmic segment spans residues 416–425; sequence GVILRDHSRS. Residues 426–446 traverse the membrane as a helical segment; it reads ALLWCGAAVQLGSLLGAVVMF. At 447-467 the chain is on the extracellular side; it reads PLVNVLRLFSSADFCSLQCSA.

The protein belongs to the riboflavin transporter family.

Its subcellular location is the cell membrane. The catalysed reaction is riboflavin(in) = riboflavin(out). Plasma membrane transporter mediating the uptake by cells of the water soluble vitamin B2/riboflavin that plays a key role in biochemical oxidation-reduction reactions of the carbohydrate, lipid, and amino acid metabolism. The protein is Solute carrier family 52, riboflavin transporter, member 3 (SLC52A3) of Bos taurus (Bovine).